The following is a 422-amino-acid chain: Tryptophan synthase beta chain 2 (422 aa).

Lysine 111 is modified (N6-(pyridoxal phosphate)lysine).

It belongs to the TrpB family. As to quaternary structure, tetramer of two alpha and two beta chains. The cofactor is pyridoxal 5'-phosphate.

The catalysed reaction is (1S,2R)-1-C-(indol-3-yl)glycerol 3-phosphate + L-serine = D-glyceraldehyde 3-phosphate + L-tryptophan + H2O. It participates in amino-acid biosynthesis; L-tryptophan biosynthesis; L-tryptophan from chorismate: step 5/5. Its function is as follows. The beta subunit is responsible for the synthesis of L-tryptophan from indole and L-serine. In Thermotoga maritima (strain ATCC 43589 / DSM 3109 / JCM 10099 / NBRC 100826 / MSB8), this protein is Tryptophan synthase beta chain 2 (trpB2).